The primary structure comprises 268 residues: Shikimate dehydrogenase (NADP(+)) (268 aa).

Residues 13-15 and T60 contribute to the shikimate site; that span reads SLS. K64 (proton acceptor) is an active-site residue. Position 76 (E76) interacts with NADP(+). 2 residues coordinate shikimate: N85 and D100. Residues 124–128, 148–153, and I209 contribute to the NADP(+) site; these read GAGGA and NRTMAR. Y211 contacts shikimate. G232 provides a ligand contact to NADP(+).

Belongs to the shikimate dehydrogenase family. In terms of assembly, homodimer.

It catalyses the reaction shikimate + NADP(+) = 3-dehydroshikimate + NADPH + H(+). Its pathway is metabolic intermediate biosynthesis; chorismate biosynthesis; chorismate from D-erythrose 4-phosphate and phosphoenolpyruvate: step 4/7. In terms of biological role, involved in the biosynthesis of the chorismate, which leads to the biosynthesis of aromatic amino acids. Catalyzes the reversible NADPH linked reduction of 3-dehydroshikimate (DHSA) to yield shikimate (SA). This is Shikimate dehydrogenase (NADP(+)) from Staphylococcus aureus (strain USA300).